A 233-amino-acid polypeptide reads, in one-letter code: Ion-translocating oxidoreductase complex subunit E (233 aa).

Transmembrane regions (helical) follow at residues 22-42 (LLGLCPLLAVTSTATNALGLG), 69-89 (IPIYVMIIAAVVSCVQMLINA), 93-113 (GLYQSLGIFIPLIVTNCIVVG), 128-148 (ALDGMAIGLGATSVMVVLGSI), and 182-202 (PMLLAMLPPGAFIGLGMLLAA).

It belongs to the NqrDE/RnfAE family. As to quaternary structure, the complex is composed of six subunits: RnfA, RnfB, RnfC, RnfD, RnfE and RnfG.

The protein resides in the cell inner membrane. Its function is as follows. Part of a membrane-bound complex that couples electron transfer with translocation of ions across the membrane. This Erwinia tasmaniensis (strain DSM 17950 / CFBP 7177 / CIP 109463 / NCPPB 4357 / Et1/99) protein is Ion-translocating oxidoreductase complex subunit E.